The chain runs to 1159 residues: ABC transporter G family member 24 (1159 aa).

2 helical membrane-spanning segments follow: residues 11–31 (FNSILKSILLLLLLFINGNNC) and 415–435 (VGSGVGFIGLTLLIGAIFLIF). Residues 454–707 (LSFHNISCYV…FIKQKIAGMT (254 aa)) enclose the ABC transporter domain. Position 497–504 (497–504 (GLSGSGKT)) interacts with ATP. Positions 752–846 (QSTSPALSSN…DNNNKNNDDD (95 aa)) are disordered. Composition is skewed to low complexity over residues 759–768 (SSNSNNSDIN) and 775–784 (INNPHNQNIH). The span at 785-795 (HQQHHHHHRHI) shows a compositional bias: basic residues. Residues 822–841 (DNINNNNNNNKVKNNDNNNK) show a composition bias toward low complexity. Residues 902-1154 (FLLRTTYFVH…LLAYVFLRFL (253 aa)) enclose the ABC transmembrane type-2 domain. 6 consecutive transmembrane segments (helical) span residues 909 to 929 (FVHIFVGLTLGYLFWKLPANL), 937 to 957 (FGAMFFMTALLSFGSITSLDL), 1005 to 1025 (YMIGLRPGILHFIYFLISLVL), 1047 to 1067 (ANMVSILLLFVFLLFDGFLLA), 1074 to 1094 (YLIGLVWISFMSYGLEIPVVN), and 1135 to 1155 (VLLGMIVGYLLLAYVFLRFLV).

This sequence belongs to the ABC transporter superfamily. ABCG family. Eye pigment precursor importer (TC 3.A.1.204) subfamily.

Its subcellular location is the membrane. In Dictyostelium discoideum (Social amoeba), this protein is ABC transporter G family member 24 (abcG24).